A 168-amino-acid chain; its full sequence is Monothiol glutaredoxin-S7, chloroplastic (168 aa).

Residues 1-54 (MAATAAASVAAISPLPGASLPRPVSARVPLLPRASPPTWRLSVGSARARSTRCL) constitute a chloroplast transit peptide. The region spanning 67 to 168 (RATLDKVVGS…QETLEKAMLS (102 aa)) is the Glutaredoxin domain. Glutathione is bound at residue K84. C92 serves as a coordination point for [2Fe-2S] cluster. Residues R121, F133, and 146-147 (CD) each bind glutathione.

This sequence belongs to the glutaredoxin family. CGFS subfamily.

The protein localises to the plastid. It localises to the chloroplast. Functionally, may only reduce GSH-thiol disulfides, but not protein disulfides. This Oryza sativa subsp. japonica (Rice) protein is Monothiol glutaredoxin-S7, chloroplastic (GRXS7).